The chain runs to 330 residues: tRNA U34 carboxymethyltransferase (330 aa).

Residues Lys91, Trp105, Lys110, Gly130, 152–154 (DPS), 181–182 (IE), Met196, Tyr200, and Arg315 each bind carboxy-S-adenosyl-L-methionine.

This sequence belongs to the class I-like SAM-binding methyltransferase superfamily. CmoB family. Homotetramer.

It carries out the reaction carboxy-S-adenosyl-L-methionine + 5-hydroxyuridine(34) in tRNA = 5-carboxymethoxyuridine(34) in tRNA + S-adenosyl-L-homocysteine + H(+). Functionally, catalyzes carboxymethyl transfer from carboxy-S-adenosyl-L-methionine (Cx-SAM) to 5-hydroxyuridine (ho5U) to form 5-carboxymethoxyuridine (cmo5U) at position 34 in tRNAs. The sequence is that of tRNA U34 carboxymethyltransferase from Shewanella frigidimarina (strain NCIMB 400).